A 149-amino-acid chain; its full sequence is Snake venom vascular endothelial growth factor toxin 2 (149 aa).

Positions methionine 1–glycine 24 are cleaved as a signal peptide. At glutamine 25 the chain carries Pyrrolidone carboxylic acid. Cystine bridges form between cysteine 38–cysteine 80, cysteine 69–cysteine 115, and cysteine 73–cysteine 117. Residues arginine 118–phenylalanine 149 are disordered.

Belongs to the PDGF/VEGF growth factor family. Snake venom VEGF subfamily. As to quaternary structure, homodimer; disulfide-linked. Interacts with VEGF receptor-1 (FLT1) with a high affinity, whereas it binds to VEGF receptor-2 (KDR) with a low affinity. Does not bind VEGF receptor-3 (FLT4). As to expression, expressed by the venom gland.

The protein localises to the secreted. Snake venom VEGFs that may contribute to venom dispersion and prey subjugation by inducing vascular permeability and hypotension. This protein induces an increase in capillary permeability after intradermal injection, as well as a drastic hypotensive effect after intravenous injection. The hypotension is mediated by nitric oxide (NO), which is produced by VEGF-activated endothelium NO synthase. Also induces angiogenesis in vitro. Like other crotalid VEGFs, this protein interacts with VEGF receptor-1 (FLT1) with a high affinity, whereas it binds to VEGF receptor-2 (KDR) with a low affinity. This Sistrurus catenatus edwardsii (Desert massasauga) protein is Snake venom vascular endothelial growth factor toxin 2.